A 370-amino-acid chain; its full sequence is MMSFNDYIFYEYLKKTNWNIHNLYCNLTQTADNILNFEIPSGVSCQLSSLTSSNFASGCKISAMPILNGSMSYVYTNVNLENLNRNITYNLQHFYEGYKHVDVPFVHYVNEFQDKKLPLRPTLLYGRMHLPSQHLDAIFATRLSPWLLFFIQGVNEIEDGVGDNLCFNWQYDTGKRCLEFVYESSGAMLGVRGLWNLNYRELNTKINMENKAPSNMRWSLGFETYYGVLTKCAGASLGMRLHSGPSHPYAPFILTCTLNPIVGHITSTFSTAEPRTKAFSAQYDFNIYSYESQLKLGIELWRSKQEMSQSTNDPTANSMSSLLKGTCSTSGDVSISWQARIRNFLLTIGTEAQLTKIDPLFFGVHFEYSK.

The protein belongs to the MDM10 family. Component of the ER-mitochondria encounter structure (ERMES) or MDM complex, composed of mmm1, mdm10, mdm12 and mdm34. Associates with the mitochondrial outer membrane sorting assembly machinery SAM(core) complex.

The protein localises to the mitochondrion outer membrane. Component of the ERMES/MDM complex, which serves as a molecular tether to connect the endoplasmic reticulum and mitochondria. Components of this complex are involved in the control of mitochondrial shape and protein biogenesis and may function in phospholipid exchange. mdm10 is involved in the late assembly steps of the general translocase of the mitochondrial outer membrane (TOM complex). Functions in the tom40-specific route of the assembly of outer membrane beta-barrel proteins, including the association of tom40 with the receptor tom22 and small TOM proteins. Can associate with the SAM(core) complex as well as the mdm12-mmm1 complex, both involved in late steps of the major beta-barrel assembly pathway, that is responsible for biogenesis of all outer membrane beta-barrel proteins. May act as a switch that shuttles between both complexes and channels precursor proteins into the tom40-specific pathway. Plays a role in mitochondrial morphology and in the inheritance of mitochondria. This is Mitochondrial distribution and morphology protein 10 (mdm10) from Schizosaccharomyces pombe (strain 972 / ATCC 24843) (Fission yeast).